A 109-amino-acid chain; its full sequence is Large ribosomal subunit protein uL22 (109 aa).

The protein belongs to the universal ribosomal protein uL22 family. Part of the 50S ribosomal subunit.

Functionally, this protein binds specifically to 23S rRNA; its binding is stimulated by other ribosomal proteins, e.g. L4, L17, and L20. It is important during the early stages of 50S assembly. It makes multiple contacts with different domains of the 23S rRNA in the assembled 50S subunit and ribosome. In terms of biological role, the globular domain of the protein is located near the polypeptide exit tunnel on the outside of the subunit, while an extended beta-hairpin is found that lines the wall of the exit tunnel in the center of the 70S ribosome. The protein is Large ribosomal subunit protein uL22 of Dechloromonas aromatica (strain RCB).